A 350-amino-acid chain; its full sequence is Putative zinc metalloprotease jhp_0242 (350 aa).

His16 lines the Zn(2+) pocket. The active site involves Glu17. His20 is a binding site for Zn(2+). The next 5 helical transmembrane spans lie at 43-63 (WFFKLFGTQFALSLIPLGGYV), 94-114 (LWILFGGAFFNFLFAVLVYFF), 249-269 (LIMGSASVKELSGVIGIVGAL), 277-297 (MLLLFGAFLSINLGILNLLPI), and 326-346 (LWLVGVGFLVFVMFLGLFNDI). Positions 108 to 177 (AVLVYFFLAL…GELILEIERN (70 aa)) constitute a PDZ domain.

It belongs to the peptidase M50B family. The cofactor is Zn(2+).

The protein localises to the cell inner membrane. In Helicobacter pylori (strain J99 / ATCC 700824) (Campylobacter pylori J99), this protein is Putative zinc metalloprotease jhp_0242.